The chain runs to 418 residues: Serine hydroxymethyltransferase 2 (418 aa).

(6S)-5,6,7,8-tetrahydrofolate-binding positions include Leu-121 and Gly-125–Leu-127. The residue at position 230 (Lys-230) is an N6-(pyridoxal phosphate)lysine. Residue Ser-355–Phe-357 coordinates (6S)-5,6,7,8-tetrahydrofolate.

This sequence belongs to the SHMT family. As to quaternary structure, homodimer. Requires pyridoxal 5'-phosphate as cofactor.

The protein resides in the cytoplasm. The catalysed reaction is (6R)-5,10-methylene-5,6,7,8-tetrahydrofolate + glycine + H2O = (6S)-5,6,7,8-tetrahydrofolate + L-serine. It participates in one-carbon metabolism; tetrahydrofolate interconversion. It functions in the pathway amino-acid biosynthesis; glycine biosynthesis; glycine from L-serine: step 1/1. Its function is as follows. Catalyzes the reversible interconversion of serine and glycine with tetrahydrofolate (THF) serving as the one-carbon carrier. This reaction serves as the major source of one-carbon groups required for the biosynthesis of purines, thymidylate, methionine, and other important biomolecules. Also exhibits THF-independent aldolase activity toward beta-hydroxyamino acids, producing glycine and aldehydes, via a retro-aldol mechanism. This Pseudomonas aeruginosa (strain ATCC 15692 / DSM 22644 / CIP 104116 / JCM 14847 / LMG 12228 / 1C / PRS 101 / PAO1) protein is Serine hydroxymethyltransferase 2.